The primary structure comprises 342 residues: Muscleblind-like protein 3 (342 aa).

C3H1-type zinc fingers lie at residues 14-42 (WLTL…HPPR), 48-74 (NGRV…HPPP), 174-202 (TDRL…HPTD), and 210-236 (DNSV…HPPP). Low complexity predominate over residues 316–326 (PSTVSTATPPA). A disordered region spans residues 316 to 342 (PSTVSTATPPASNVPYVPTTTGNQLKY). The span at 333-342 (PTTTGNQLKY) shows a compositional bias: polar residues.

Belongs to the muscleblind family.

The protein resides in the nucleus. Its subcellular location is the cytoplasm. In terms of biological role, mediates pre-mRNA alternative splicing regulation. Acts either as activator or repressor of splicing on specific pre-mRNA targets. Inhibits cardiac troponin-T (TNNT2) pre-mRNA exon inclusion but induces insulin receptor (IR) pre-mRNA exon inclusion in muscle. Antagonizes the alternative splicing activity pattern of CELF proteins. Could inhibit terminal muscle differentiation, acting at approximately the time of myogenin induction. The sequence is that of Muscleblind-like protein 3 (Mbnl3) from Mus musculus (Mouse).